A 446-amino-acid chain; its full sequence is MAGFMKYKSVSTTIETVRLKLILTAVLFLFPFSQTSGASRPIIEIKDGQEIKVQAAQHFCYNNTIIPGWRETWTRIQVRVWSTTKLKVTVVNDEQDLKELEHFSIWKLVQYFVREQTNETTISVSLFNNKTCFRVDPSESRTLYTVQPSRHFDIYLFLVFLAGVLLFFYADVLSRSQVFHYSAGMSTGMIASLLILIFIVYRFLPKKSPFYMLVVGGWSFSLYIIQLVFRNLQVILTDHWHLAIGYVFVVGFISFAVCYRYGPLVEERSINILSWALQIFGLLLVYAGIQVQQVAFAIMIAAFCSKNLEYPFNTAFMLYHKLKPKKLEPRRLLTEEEFQRQSEVETQKALEELRKYCGSPDFNTWKTVSRLQSPKRFADFIEGSPHLLSNEVSVHMQEYGLGGSFFEDELFSTDEEDKEEEEDGWETEDDIKPEVTSPRMNNTRGK.

Positions 1-37 are cleaved as a signal peptide; sequence MAGFMKYKSVSTTIETVRLKLILTAVLFLFPFSQTSG. Residues asparagine 62, asparagine 118, and asparagine 129 are each glycosylated (N-linked (GlcNAc...) asparagine). 5 consecutive transmembrane segments (helical) span residues 154 to 174, 181 to 201, 209 to 229, 239 to 259, and 269 to 289; these read IYLF…DVLS, YSAG…FIVY, PFYM…QLVF, HWHL…AVCY, and SINI…YAGI. A compositionally biased stretch (acidic residues) spans 410-431; it reads LFSTDEEDKEEEEDGWETEDDI. Positions 410-446 are disordered; that stretch reads LFSTDEEDKEEEEDGWETEDDIKPEVTSPRMNNTRGK. An N-linked (GlcNAc...) asparagine glycan is attached at asparagine 441.

It belongs to the NEMP family.

It localises to the nucleus inner membrane. Contributes to nuclear envelope stiffness in germ cells. Involved in male and female fertility. Essential for normal erythropoiesis. Required for efficient nuclear envelope opening and enucleation during the late stages of erythroblast maturation. The polypeptide is Nuclear envelope integral membrane protein 1 (Danio rerio (Zebrafish)).